A 757-amino-acid polypeptide reads, in one-letter code: RNA-directed RNA polymerase catalytic subunit (757 aa).

2 short sequence motifs (nuclear localization signal) span residues 187–195 (RKRRVRDNM) and 203–216 (RTIG…NKRS). The tract at residues 249 to 256 (RGFVYFVE) is promoter-binding site. In terms of domain architecture, RdRp catalytic spans 286–483 (VRKMMTNSQD…GINMSKKKSY (198 aa)).

This sequence belongs to the influenza viruses polymerase PB1 family. As to quaternary structure, influenza RNA polymerase is composed of three subunits: PB1, PB2 and PA. Interacts (via N-terminus) with PA (via C-terminus). Interacts (via C-terminus) with PB2 (via N-terminus); this interaction is essential for transcription initiation. Interacts (via C-terminus) with human PKP2 (via N-terminus); the interaction competitively inhibits the interaction between the RNA polymerase subunits PB1 and PB2. Post-translationally, phosphorylated by host PRKCA.

Its subcellular location is the host nucleus. The protein resides in the host cytoplasm. It catalyses the reaction RNA(n) + a ribonucleoside 5'-triphosphate = RNA(n+1) + diphosphate. Its function is as follows. RNA-dependent RNA polymerase which is responsible for replication and transcription of virus RNA segments. The transcription of viral mRNAs occurs by a unique mechanism called cap-snatching. 5' methylated caps of cellular mRNAs are cleaved after 10-13 nucleotides by PA. In turn, these short capped RNAs are used as primers by PB1 for transcription of viral mRNAs. During virus replication, PB1 initiates RNA synthesis and copy vRNA into complementary RNA (cRNA) which in turn serves as a template for the production of more vRNAs. This is RNA-directed RNA polymerase catalytic subunit from Influenza A virus (strain A/Henry/1936 H1N1).